The following is a 782-amino-acid chain: ATP-dependent RNA helicase MAK5 (782 aa).

The segment covering 1–22 (MAKQGKNKVSKPRKPPTLKQKL) has biased composition (basic residues). Disordered regions lie at residues 1–24 (MAKQ…KLKK) and 71–164 (FIVR…KDDK). Residues 71 to 88 (FIVRDNGKVENKSKKEET) show a composition bias toward basic and acidic residues. Residues 96–147 (MDVEDNETPEVEDEKPTEQEEEEEEEEEEEEEEEEEEEEEEFAGFEDDENNQ) show a composition bias toward acidic residues. Positions 197 to 225 (EGDLGSSISAYTLYGLSQLDFKKPTPIQK) match the Q motif motif. Residues 228–426 (IPIALSGKDV…DRHQKGKSSS (199 aa)) enclose the Helicase ATP-binding domain. 241–248 (ATTGSGKT) is an ATP binding site. A DEAD box motif is present at residues 364-367 (DEAD). Residues 478-635 (YLYYFLLMYK…DVKLLPIEMD (158 aa)) form the Helicase C-terminal domain. The segment at 762-782 (DLKGSKNKNKKIEKKRISKKK) is disordered. A compositionally biased stretch (basic residues) spans 766 to 782 (SKNKNKKIEKKRISKKK).

It belongs to the DEAD box helicase family. DDX24/MAK5 subfamily.

Its subcellular location is the nucleus. It is found in the nucleolus. The catalysed reaction is ATP + H2O = ADP + phosphate + H(+). In terms of biological role, ATP-binding RNA helicase involved in the biogenesis of 60S ribosomal subunits and is required for the normal formation of 25S and 5.8S rRNAs. The sequence is that of ATP-dependent RNA helicase MAK5 (MAK5) from Candida albicans (strain SC5314 / ATCC MYA-2876) (Yeast).